The following is a 399-amino-acid chain: Tryptophan synthase beta chain (399 aa).

Lys-92 bears the N6-(pyridoxal phosphate)lysine mark.

The protein belongs to the TrpB family. As to quaternary structure, tetramer of two alpha and two beta chains. It depends on pyridoxal 5'-phosphate as a cofactor.

It catalyses the reaction (1S,2R)-1-C-(indol-3-yl)glycerol 3-phosphate + L-serine = D-glyceraldehyde 3-phosphate + L-tryptophan + H2O. The protein operates within amino-acid biosynthesis; L-tryptophan biosynthesis; L-tryptophan from chorismate: step 5/5. In terms of biological role, the beta subunit is responsible for the synthesis of L-tryptophan from indole and L-serine. This is Tryptophan synthase beta chain from Acidithiobacillus ferrooxidans (strain ATCC 23270 / DSM 14882 / CIP 104768 / NCIMB 8455) (Ferrobacillus ferrooxidans (strain ATCC 23270)).